We begin with the raw amino-acid sequence, 414 residues long: CinA-like protein (414 aa).

Belongs to the CinA family.

This is CinA-like protein from Acidobacterium capsulatum (strain ATCC 51196 / DSM 11244 / BCRC 80197 / JCM 7670 / NBRC 15755 / NCIMB 13165 / 161).